Consider the following 332-residue polypeptide: DNA-directed RNA polymerase subunit alpha (332 aa).

The segment at 1 to 244 is alpha N-terminal domain (alpha-NTD); it reads MKKHAKVYYS…AHLNLLADVE (244 aa). The interval 259 to 332 is alpha C-terminal domain (alpha-CTD); sequence IKEEPIRRFS…NYKNENKGEN (74 aa).

Belongs to the RNA polymerase alpha chain family. Homodimer. The RNAP catalytic core consists of 2 alpha, 1 beta, 1 beta' and 1 omega subunit. When a sigma factor is associated with the core the holoenzyme is formed, which can initiate transcription.

It carries out the reaction RNA(n) + a ribonucleoside 5'-triphosphate = RNA(n+1) + diphosphate. DNA-dependent RNA polymerase catalyzes the transcription of DNA into RNA using the four ribonucleoside triphosphates as substrates. In Mesomycoplasma hyopneumoniae (strain 7448) (Mycoplasma hyopneumoniae), this protein is DNA-directed RNA polymerase subunit alpha.